A 106-amino-acid chain; its full sequence is MSTAIAQQKIRIRLKAFDRRMLDLSCDKIIETADTTAASAIGPIPLPTKRKIYCVLRSPHVDKDSREHFETRTHRRIIDIYSPSAKTIDALMKLDLPSGVDIEVKL.

Belongs to the universal ribosomal protein uS10 family. Part of the 30S ribosomal subunit.

Involved in the binding of tRNA to the ribosomes. The sequence is that of Small ribosomal subunit protein uS10 from Synechococcus sp. (strain CC9902).